Consider the following 586-residue polypeptide: Phosphomethylpyrimidine synthase (586 aa).

Residues 1–58 (MKQSVSAEQIELKSSLPGSKKVYVDGTREGMKVPMREIEQSDTNGVQNPPIRVYDTSG) are disordered. The span at 22–39 (VYVDGTREGMKVPMREIE) shows a compositional bias: basic and acidic residues. Residues asparagine 193, methionine 222, tyrosine 251, histidine 287, 307–309 (SRG), 348–351 (DGLR), and glutamate 387 each bind substrate. Zn(2+) is bound at residue histidine 391. Tyrosine 414 contacts substrate. Residue histidine 455 coordinates Zn(2+). The [4Fe-4S] cluster site is built by cysteine 535, cysteine 538, and cysteine 543.

This sequence belongs to the ThiC family. [4Fe-4S] cluster is required as a cofactor.

The enzyme catalyses 5-amino-1-(5-phospho-beta-D-ribosyl)imidazole + S-adenosyl-L-methionine = 4-amino-2-methyl-5-(phosphooxymethyl)pyrimidine + CO + 5'-deoxyadenosine + formate + L-methionine + 3 H(+). The protein operates within cofactor biosynthesis; thiamine diphosphate biosynthesis. In terms of biological role, catalyzes the synthesis of the hydroxymethylpyrimidine phosphate (HMP-P) moiety of thiamine from aminoimidazole ribotide (AIR) in a radical S-adenosyl-L-methionine (SAM)-dependent reaction. This chain is Phosphomethylpyrimidine synthase, found in Bacillus mycoides (strain KBAB4) (Bacillus weihenstephanensis).